Reading from the N-terminus, the 610-residue chain is Autophagy-related protein 22-1 (610 aa).

Positions 1–11 (MAFTPSSPPSP) are enriched in pro residues. Residues 1–29 (MAFTPSSPPSPAADASQRPSRYPGEDTTP) are disordered. The helical transmembrane segment at 35 to 55 (ILGWYAYGIAAEVFAVCGVGS) threads the bilayer. Asn90 carries an N-linked (GlcNAc...) asparagine glycan. A run of 3 helical transmembrane segments spans residues 120–140 (SFAMYTFSLAVLVQALTLISF), 152–171 (TLLLAFGFIGSATSMLFVFV), and 189–209 (CLGSSFVVLNSFLPVLVANDP). A disordered region spans residues 229–265 (GQFEPRDSFSERNPEFESQYTPGIGLGSKPSTNATSP). Residues 232 to 243 (EPRDSFSERNPE) show a composition bias toward basic and acidic residues. N-linked (GlcNAc...) asparagine glycosylation occurs at Asn261. The next 8 membrane-spanning stretches (helical) occupy residues 278–298 (VGLGYCAAVLVQILSIGLLFA), 310–330 (TLPLRFVLLLVGIWWFSFTMV), 384–404 (VFLVAWFLLSDAIATVSGTAI), 418–438 (VGCLSITATLSGMTGAFLWPV), 453–473 (LCIALFEIIPLYGMLAYIPLF), 488–510 (FPLAIVHGIVSGGLSSYCRSFFG), 522–544 (YALYAATDKGSSVIGPAIVGMLI), and 553–573 (GFFFIAILIVLPIPLVWMVNA). Residues 588–610 (AKGQESETGEPGEEAEGLLARGA) form a disordered region. Acidic residues predominate over residues 594–603 (ETGEPGEEAE).

Belongs to the ATG22 family.

It localises to the vacuole membrane. Its function is as follows. Vacuolar effluxer which mediate the efflux of amino acids resulting from autophagic degradation. The release of autophagic amino acids allows the maintenance of protein synthesis and viability during nitrogen starvation. This chain is Autophagy-related protein 22-1 (atg22-1), found in Aspergillus terreus (strain NIH 2624 / FGSC A1156).